Consider the following 353-residue polypeptide: Nicotinate-nucleotide--dimethylbenzimidazole phosphoribosyltransferase (353 aa).

Glutamate 319 acts as the Proton acceptor in catalysis.

The protein belongs to the CobT family.

The enzyme catalyses 5,6-dimethylbenzimidazole + nicotinate beta-D-ribonucleotide = alpha-ribazole 5'-phosphate + nicotinate + H(+). Its pathway is nucleoside biosynthesis; alpha-ribazole biosynthesis; alpha-ribazole from 5,6-dimethylbenzimidazole: step 1/2. Functionally, catalyzes the synthesis of alpha-ribazole-5'-phosphate from nicotinate mononucleotide (NAMN) and 5,6-dimethylbenzimidazole (DMB). The sequence is that of Nicotinate-nucleotide--dimethylbenzimidazole phosphoribosyltransferase from Syntrophobacter fumaroxidans (strain DSM 10017 / MPOB).